Consider the following 260-residue polypeptide: Uroplakin-1b (260 aa).

Residues 2–15 (AKDDSTVRCFQGLL) are Cytoplasmic-facing. Residues 16–36 (IFGNVIIGMCSIALMAECIFF) traverse the membrane as a helical segment. The Extracellular portion of the chain corresponds to 37-60 (VSDQNSLYPLLEATNNDDIYAAAW). The chain crosses the membrane as a helical span at residues 61 to 81 (IGMFVGICLFCLSVLGIVGIM). The Cytoplasmic portion of the chain corresponds to 82 to 86 (KSNRK). The chain crosses the membrane as a helical span at residues 87-107 (ILLVYFILMFIVYAFEVASCI). Residues 108 to 229 (TAATQRDFFT…ELISGPMNRH (122 aa)) lie on the Extracellular side of the membrane. The helical transmembrane segment at 230-250 (AWGVAWFGFAILCWTFWVLLG) threads the bilayer. At 251–260 (TMFYWSRIDY) the chain is on the cytoplasmic side.

The protein belongs to the tetraspanin (TM4SF) family. In terms of assembly, heterodimer with uroplakin-3A (UPK3A) or uroplakin-3B (UPK3B). In terms of processing, N-glycosylated with high-mannose oligosaccharides. As to expression, bladder epithelium.

It localises to the membrane. Functionally, component of the asymmetric unit membrane (AUM); a highly specialized biomembrane elaborated by terminally differentiated urothelial cells. May play an important role in normal bladder epithelial physiology, possibly in regulating membrane permeability of superficial umbrella cells or in stabilizing the apical membrane through AUM/cytoskeletal interactions. In Bos taurus (Bovine), this protein is Uroplakin-1b (UPK1B).